The primary structure comprises 204 residues: 3-isopropylmalate dehydratase small subunit (204 aa).

Belongs to the LeuD family. LeuD type 1 subfamily. In terms of assembly, heterodimer of LeuC and LeuD.

It carries out the reaction (2R,3S)-3-isopropylmalate = (2S)-2-isopropylmalate. Its pathway is amino-acid biosynthesis; L-leucine biosynthesis; L-leucine from 3-methyl-2-oxobutanoate: step 2/4. In terms of biological role, catalyzes the isomerization between 2-isopropylmalate and 3-isopropylmalate, via the formation of 2-isopropylmaleate. This Ruthia magnifica subsp. Calyptogena magnifica protein is 3-isopropylmalate dehydratase small subunit.